A 167-amino-acid chain; its full sequence is Large ribosomal subunit protein uL10 (167 aa).

It belongs to the universal ribosomal protein uL10 family. As to quaternary structure, part of the ribosomal stalk of the 50S ribosomal subunit. The N-terminus interacts with L11 and the large rRNA to form the base of the stalk. The C-terminus forms an elongated spine to which L12 dimers bind in a sequential fashion forming a multimeric L10(L12)X complex.

Functionally, forms part of the ribosomal stalk, playing a central role in the interaction of the ribosome with GTP-bound translation factors. The protein is Large ribosomal subunit protein uL10 of Cytophaga hutchinsonii (strain ATCC 33406 / DSM 1761 / CIP 103989 / NBRC 15051 / NCIMB 9469 / D465).